The sequence spans 366 residues: Chorismate synthase (366 aa).

NADP(+)-binding residues include Arg-48 and Arg-54. FMN contacts are provided by residues 125–127 (RSS), 238–239 (NA), Gly-278, 293–297 (KPTSS), and Arg-319.

This sequence belongs to the chorismate synthase family. As to quaternary structure, homotetramer. It depends on FMNH2 as a cofactor.

It catalyses the reaction 5-O-(1-carboxyvinyl)-3-phosphoshikimate = chorismate + phosphate. The protein operates within metabolic intermediate biosynthesis; chorismate biosynthesis; chorismate from D-erythrose 4-phosphate and phosphoenolpyruvate: step 7/7. Catalyzes the anti-1,4-elimination of the C-3 phosphate and the C-6 proR hydrogen from 5-enolpyruvylshikimate-3-phosphate (EPSP) to yield chorismate, which is the branch point compound that serves as the starting substrate for the three terminal pathways of aromatic amino acid biosynthesis. This reaction introduces a second double bond into the aromatic ring system. This chain is Chorismate synthase, found in Neisseria meningitidis serogroup C / serotype 2a (strain ATCC 700532 / DSM 15464 / FAM18).